We begin with the raw amino-acid sequence, 595 residues long: Grainyhead-like protein 3 homolog (595 aa).

Residues 29 to 92 (DAWSKYLENP…CDQVKRSCSE (64 aa)) form a transcription activation region. The 234-residue stretch at 221-454 (ANRDFEYTLE…DMETHPVLFI (234 aa)) folds into the Grh/CP2 DB domain. Residues 484 to 505 (SSQSFPKGLEAPPSKQQTSEDS) form a disordered region.

The protein belongs to the grh/CP2 family. Grainyhead subfamily.

It is found in the nucleus. Transcription factor playing important roles in primary neurulation and in the differentiation of stratified epithelia of both ectodermal and endodermal origin. Binds directly to the consensus DNA sequence 5'-AACCGGTT-3' acting as an activator and repressor on distinct target genes. This Xenopus laevis (African clawed frog) protein is Grainyhead-like protein 3 homolog (grhl3).